The following is a 445-amino-acid chain: Putative ATP-dependent RNA helicase L538 (445 aa).

The Helicase ATP-binding domain maps to 14-151 (IEFMKNNRGV…AVLVNIVRGE (138 aa)). 27 to 34 (HSTGAGKT) provides a ligand contact to ATP. Positions 101–104 (DEAH) match the DEAH box motif. In terms of domain architecture, Helicase C-terminal spans 273–442 (KIEDIMKYII…VIDASIENNY (170 aa)).

This sequence belongs to the DEAD box helicase family. DEAH subfamily.

The protein localises to the virion. The enzyme catalyses ATP + H2O = ADP + phosphate + H(+). The sequence is that of Putative ATP-dependent RNA helicase L538 from Acanthamoeba polyphaga mimivirus (APMV).